A 2099-amino-acid chain; its full sequence is Dedicator of cytokinesis protein 8 (2099 aa).

Phosphoserine is present on residues Ser-20, Ser-139, and Ser-451. A C2 DOCK-type domain is found at 560-729 (RNLLYVYPQR…GVFNIEVQAV (170 aa)). Residues Ser-904, Ser-936, Ser-1145, and Ser-1243 each carry the phosphoserine modification. A DOCKER domain is found at 1632–2066 (KSYQASPDLR…LRPMIERKIP (435 aa)). At Ser-2087 the chain carries Phosphoserine.

The protein belongs to the DOCK family. As to quaternary structure, interacts (via DOCKER domain) with GTPase CDC42; the interaction activates CDC42 by exchanging GDP for GTP. The unphosphorylated form interacts (via DOCKER domain) with LRCH1 (via LRR repeats); the interaction prevents the association between DOCK8 and CDC42. Interacts with CCDC88B. In terms of processing, in response to chemokine CXCL12/SDF-1-alpha stimulation, phosphorylated by PRKCA/PKC-alpha which promotes DOCK8 dissociation from LRCH1. Expressed in peripheral blood mononuclear cells (PBMCs).

Its subcellular location is the cytoplasm. The protein resides in the cell membrane. The protein localises to the cell projection. It is found in the lamellipodium membrane. Guanine nucleotide exchange factor (GEF) which specifically activates small GTPase CDC42 by exchanging bound GDP for free GTP. During immune responses, required for interstitial dendritic cell (DC) migration by locally activating CDC42 at the leading edge membrane of DC. Required for CD4(+) T-cell migration in response to chemokine stimulation by promoting CDC42 activation at T cell leading edge membrane. Is involved in NK cell cytotoxicity by controlling polarization of microtubule-organizing center (MTOC), and possibly regulating CCDC88B-mediated lytic granule transport to MTOC during cell killing. The chain is Dedicator of cytokinesis protein 8 (DOCK8) from Homo sapiens (Human).